Here is a 440-residue protein sequence, read N- to C-terminus: Deoxyguanosinetriphosphate triphosphohydrolase-like protein (440 aa).

Residues 62–255 (RLTHSLEAAQ…MELADDIAYG (194 aa)) enclose the HD domain.

It belongs to the dGTPase family. Type 2 subfamily.

The polypeptide is Deoxyguanosinetriphosphate triphosphohydrolase-like protein (Vibrio parahaemolyticus serotype O3:K6 (strain RIMD 2210633)).